Reading from the N-terminus, the 240-residue chain is Phosphoribosylaminoimidazole-succinocarboxamide synthase (240 aa).

Belongs to the SAICAR synthetase family.

It catalyses the reaction 5-amino-1-(5-phospho-D-ribosyl)imidazole-4-carboxylate + L-aspartate + ATP = (2S)-2-[5-amino-1-(5-phospho-beta-D-ribosyl)imidazole-4-carboxamido]succinate + ADP + phosphate + 2 H(+). It participates in purine metabolism; IMP biosynthesis via de novo pathway; 5-amino-1-(5-phospho-D-ribosyl)imidazole-4-carboxamide from 5-amino-1-(5-phospho-D-ribosyl)imidazole-4-carboxylate: step 1/2. This is Phosphoribosylaminoimidazole-succinocarboxamide synthase from Coxiella burnetii (strain RSA 493 / Nine Mile phase I).